Reading from the N-terminus, the 497-residue chain is UDP-N-acetylmuramoyl-L-alanyl-D-glutamate--2,6-diaminopimelate ligase (497 aa).

Ser32 serves as a coordination point for UDP-N-acetyl-alpha-D-muramoyl-L-alanyl-D-glutamate. Residue 113-119 coordinates ATP; sequence GTNGKTT. UDP-N-acetyl-alpha-D-muramoyl-L-alanyl-D-glutamate contacts are provided by residues 155-156, Ser182, Gln188, and Arg190; that span reads TT. Lys222 is modified (N6-carboxylysine). Meso-2,6-diaminopimelate-binding positions include Arg385, 409–412, Gly460, and Glu464; that span reads DNPR. Positions 409 to 412 match the Meso-diaminopimelate recognition motif motif; sequence DNPR.

This sequence belongs to the MurCDEF family. MurE subfamily. Mg(2+) serves as cofactor. In terms of processing, carboxylation is probably crucial for Mg(2+) binding and, consequently, for the gamma-phosphate positioning of ATP.

It localises to the cytoplasm. The catalysed reaction is UDP-N-acetyl-alpha-D-muramoyl-L-alanyl-D-glutamate + meso-2,6-diaminopimelate + ATP = UDP-N-acetyl-alpha-D-muramoyl-L-alanyl-gamma-D-glutamyl-meso-2,6-diaminopimelate + ADP + phosphate + H(+). Its pathway is cell wall biogenesis; peptidoglycan biosynthesis. In terms of biological role, catalyzes the addition of meso-diaminopimelic acid to the nucleotide precursor UDP-N-acetylmuramoyl-L-alanyl-D-glutamate (UMAG) in the biosynthesis of bacterial cell-wall peptidoglycan. In Thermosynechococcus vestitus (strain NIES-2133 / IAM M-273 / BP-1), this protein is UDP-N-acetylmuramoyl-L-alanyl-D-glutamate--2,6-diaminopimelate ligase.